An 864-amino-acid chain; its full sequence is Leucine--tRNA ligase (864 aa).

Positions 42–52 (PYPSGKLHMGH) match the 'HIGH' region motif. The 'KMSKS' region signature appears at 624-628 (KMSKS). Lys627 is a binding site for ATP.

This sequence belongs to the class-I aminoacyl-tRNA synthetase family.

Its subcellular location is the cytoplasm. The catalysed reaction is tRNA(Leu) + L-leucine + ATP = L-leucyl-tRNA(Leu) + AMP + diphosphate. In Burkholderia pseudomallei (strain 1106a), this protein is Leucine--tRNA ligase.